Consider the following 788-residue polypeptide: Nuclear autoantigenic sperm protein (788 aa).

Residue alanine 2 is modified to N-acetylalanine. At lysine 33 the chain carries N6-acetyllysine. The TPR 1 repeat unit spans residues alanine 43–lysine 76. The interval histidine 114–alanine 139 is disordered. A histone-binding region spans residues glutamate 116–serine 127. Acidic residues predominate over residues glutamate 116–alanine 139. Phosphothreonine is present on threonine 123. Residue serine 127 is modified to Phosphoserine. Residue glutamate 138 is modified to Phosphothreonine. A Phosphoserine modification is found at glutamate 141. A compositionally biased stretch (basic and acidic residues) spans methionine 151–leucine 201. The disordered stretch occupies residues methionine 151–asparagine 507. At threonine 170 the chain carries Phosphothreonine. Phosphoserine occurs at positions 176, 189, and 191. Residues glutamate 211–serine 244 form a histone-binding region. N6-acetyllysine is present on lysine 243. Serine 244 bears the Phosphoserine mark. Over residues glutamate 252–serine 278 the composition is skewed to basic and acidic residues. Lysine 288 is modified (N6-acetyllysine). 2 positions are modified to phosphoserine: serine 299 and serine 321. The segment covering glutamate 337 to glutamate 362 has biased composition (low complexity). Phosphothreonine is present on threonine 390. 4 positions are modified to phosphoserine: serine 397, serine 408, serine 421, and serine 451. The segment covering arginine 400–arginine 415 has biased composition (basic and acidic residues). Phosphothreonine is present on residues threonine 464 and threonine 477. Residues glutamate 469–isoleucine 512 form a histone-binding region. Acidic residues predominate over residues glutamate 475 to lysine 485. Serine 480 bears the Phosphoserine mark. The residue at position 490 (threonine 490) is a Phosphothreonine. Phosphoserine occurs at positions 497 and 503. TPR repeat units lie at residues alanine 542 to tyrosine 575 and alanine 584 to arginine 617. A coiled-coil region spans residues valine 604–serine 659. A Phosphoserine modification is found at serine 662. Residues serine 678–cysteine 788 form a disordered region. Residue threonine 683 is modified to Phosphothreonine. A phosphoserine mark is found at serine 705 and serine 706. The Nuclear localization signal motif lies at valine 716–proline 722. A compositionally biased stretch (basic and acidic residues) spans lysine 721–proline 739. Serine 726 carries the phosphoserine modification. Residue lysine 736 forms a Glycyl lysine isopeptide (Lys-Gly) (interchain with G-Cter in SUMO1) linkage. A phosphoserine mark is found at serine 745, serine 751, and serine 756.

It belongs to the NASP family. As to quaternary structure, binds to linker H1 histones. Interacts with histones H2A, H2B, H3 and H4. Interacts with histone H3.3. Interacts with histones H3 and H4; NASP is a histone chaperone that stabilizes and maintains a soluble pool of histone H3-H4 dimers. Interacts with ASF1A and ASF1B; the interaction is probably indirect and mediated by H3-H4. Also binds to HSP90 in the cytoplasm; this interaction stimulates binding of NASP to H1-6/H1T. In terms of tissue distribution, isoform 1 is testis- and sperm-specific.

Its subcellular location is the cytoplasm. It localises to the nucleus. Its function is as follows. Component of the histone chaperone network. Binds and stabilizes histone H3-H4 not bound to chromatin to maintain a soluble reservoir and modulate degradation by chaperone-mediated autophagy. Required for DNA replication, normal cell cycle progression and cell proliferation. Forms a cytoplasmic complex with HSP90 and H1 linker histones and stimulates HSP90 ATPase activity. NASP and H1 histone are subsequently released from the complex and translocate to the nucleus where the histone is released for binding to DNA. Functionally, stabilizes soluble histone H3-H4. This Homo sapiens (Human) protein is Nuclear autoantigenic sperm protein (NASP).